A 751-amino-acid polypeptide reads, in one-letter code: Protein WEAK CHLOROPLAST MOVEMENT UNDER BLUE LIGHT-like 3 (751 aa).

Phosphoserine is present on S113. Coiled coils occupy residues 165 to 558 and 588 to 647; these read ERRK…ALQE and QALE…KARD. 2 stretches are compositionally biased toward basic and acidic residues: residues 455 to 467 and 625 to 689; these read RERQDLEETKQKE and NREM…RNKE. 2 disordered regions span residues 455 to 479 and 625 to 751; these read RERQDLEETKQKESTGLARTNDKDA and NREM…HSHK. Low complexity predominate over residues 704 to 723; sequence GSSSNNTGGSTTTNNNNLTP.

Belongs to the WEB family.

The protein is Protein WEAK CHLOROPLAST MOVEMENT UNDER BLUE LIGHT-like 3 (WEL3) of Arabidopsis thaliana (Mouse-ear cress).